A 166-amino-acid polypeptide reads, in one-letter code: Lipoprotein signal peptidase (166 aa).

Transmembrane regions (helical) follow at residues A9–L29, V37–N57, W71–L91, and F100–L120. Catalysis depends on residues D126 and D144. Residues H136 to F156 form a helical membrane-spanning segment.

The protein belongs to the peptidase A8 family.

The protein localises to the cell inner membrane. It carries out the reaction Release of signal peptides from bacterial membrane prolipoproteins. Hydrolyzes -Xaa-Yaa-Zaa-|-(S,diacylglyceryl)Cys-, in which Xaa is hydrophobic (preferably Leu), and Yaa (Ala or Ser) and Zaa (Gly or Ala) have small, neutral side chains.. Its pathway is protein modification; lipoprotein biosynthesis (signal peptide cleavage). Its function is as follows. This protein specifically catalyzes the removal of signal peptides from prolipoproteins. The protein is Lipoprotein signal peptidase of Paraburkholderia phymatum (strain DSM 17167 / CIP 108236 / LMG 21445 / STM815) (Burkholderia phymatum).